We begin with the raw amino-acid sequence, 28 residues long: Taicatoxin, alpha-neurotoxin-like component (28 aa).

Cys3 and Cys21 are joined by a disulfide.

This sequence belongs to the three-finger toxin family. Long-chain subfamily. Type II alpha-neurotoxin sub-subfamily. As to quaternary structure, heterotrimer composed of this alpha-neurotoxin-like peptide of 8 kDa, a neurotoxic phospholipase of 16 kDa (AC Q7LZG2) and a serine protease inhibitor of 7 kDa (AC B7S4N9) at an approximate stoichiometry of 1:1:4; non-covalently linked. In terms of tissue distribution, expressed by the venom gland.

The protein localises to the secreted. Functionally, the heterotrimer blocks the voltage-dependent L-type calcium channels (Cav1/CACNA1) from the heart, and the small conductance calcium-activated potassium channels (KCa2/KCNN) in the chromaffin cells and in the brain. Is very toxic to mice. This Oxyuranus scutellatus scutellatus (Australian taipan) protein is Taicatoxin, alpha-neurotoxin-like component.